Here is a 292-residue protein sequence, read N- to C-terminus: Protease HtpX homolog (292 aa).

2 helical membrane-spanning segments follow: residues 4-24 (ILLFVLTNLAVVLVLGVVASL) and 39-59 (GALLGFALVMGFGGAFISLLI). His144 contacts Zn(2+). Residue Glu145 is part of the active site. His148 provides a ligand contact to Zn(2+). A run of 2 helical transmembrane segments spans residues 159–179 (LIQGVMNTFVVFLSRVIGYAV) and 199–219 (VTTIVLDIALGFVAAIIVAWF). Glu224 lines the Zn(2+) pocket.

The protein belongs to the peptidase M48B family. Zn(2+) is required as a cofactor.

It localises to the cell inner membrane. In Verminephrobacter eiseniae (strain EF01-2), this protein is Protease HtpX homolog.